The sequence spans 145 residues: D-aminoacyl-tRNA deacylase (145 aa).

A Gly-cisPro motif, important for rejection of L-amino acids motif is present at residues 137–138 (GP).

It belongs to the DTD family. In terms of assembly, homodimer.

The protein localises to the cytoplasm. The catalysed reaction is glycyl-tRNA(Ala) + H2O = tRNA(Ala) + glycine + H(+). It catalyses the reaction a D-aminoacyl-tRNA + H2O = a tRNA + a D-alpha-amino acid + H(+). In terms of biological role, an aminoacyl-tRNA editing enzyme that deacylates mischarged D-aminoacyl-tRNAs. Also deacylates mischarged glycyl-tRNA(Ala), protecting cells against glycine mischarging by AlaRS. Acts via tRNA-based rather than protein-based catalysis; rejects L-amino acids rather than detecting D-amino acids in the active site. By recycling D-aminoacyl-tRNA to D-amino acids and free tRNA molecules, this enzyme counteracts the toxicity associated with the formation of D-aminoacyl-tRNA entities in vivo and helps enforce protein L-homochirality. This is D-aminoacyl-tRNA deacylase from Aeromonas hydrophila subsp. hydrophila (strain ATCC 7966 / DSM 30187 / BCRC 13018 / CCUG 14551 / JCM 1027 / KCTC 2358 / NCIMB 9240 / NCTC 8049).